We begin with the raw amino-acid sequence, 276 residues long: uncharacterized protein (276 aa).

Tyrosine 47 (proton donor) is an active-site residue. Histidine 110 serves as a coordination point for substrate.

This sequence belongs to the aldo/keto reductase family.

Its subcellular location is the cytoplasm. The protein localises to the nucleus. This is an uncharacterized protein from Schizosaccharomyces pombe (strain 972 / ATCC 24843) (Fission yeast).